The following is a 462-amino-acid chain: Elongation factor 1-alpha 1 (462 aa).

Gly2 is modified (n,N,N-trimethylglycine). Residues 5-242 (KTHINIVVIG…DCILPPTRPT (238 aa)) form the tr-type G domain. Positions 14 to 21 (GHVDSGKS) are G1. 14–21 (GHVDSGKS) is a GTP binding site. An N6,N6,N6-trimethyllysine; alternate modification is found at Lys36. An N6,N6-dimethyllysine; alternate modification is found at Lys36. Lys36 carries the post-translational modification N6-methyllysine; alternate. Lys55 carries the post-translational modification N6,N6-dimethyllysine. The interval 70–74 (GITID) is G2. An N6,N6,N6-trimethyllysine; by EEF1AKMT1 modification is found at Lys79. Residues 91–94 (DAPG) are G3. 153-156 (NKMD) contacts GTP. The G4 stretch occupies residues 153-156 (NKMD). Lys165 carries the N6,N6,N6-trimethyllysine; alternate; by EEF1AKMT3 modification. Position 165 is an N6,N6-dimethyllysine; alternate; by EEF1AKMT3 (Lys165). An N6-acetyllysine; alternate modification is found at Lys165. An N6-methyllysine; alternate; by EEF1AKMT3 modification is found at Lys165. Lys172 carries the N6-acetyllysine modification. 194–196 (SGW) serves as a coordination point for GTP. Residues 194 to 196 (SGW) are G5. Lys273 carries the N6-acetyllysine modification. Ser300 bears the Phosphoserine; by TGFBR1 mark. A 5-glutamyl glycerylphosphorylethanolamine modification is found at Glu301. Lys318 carries the post-translational modification N6,N6,N6-trimethyllysine; by EEF1AKMT2. The residue at position 374 (Glu374) is a 5-glutamyl glycerylphosphorylethanolamine. Lys385 participates in a covalent cross-link: Glycyl lysine isopeptide (Lys-Gly) (interchain with G-Cter in ubiquitin). Lys392 is subject to N6-acetyllysine; alternate. Lys392 is subject to N6-succinyllysine; alternate. Phosphothreonine; by PASK is present on Thr432. Lys439 carries the N6-acetyllysine modification.

This sequence belongs to the TRAFAC class translation factor GTPase superfamily. Classic translation factor GTPase family. EF-Tu/EF-1A subfamily. As to quaternary structure, found in a nuclear export complex with XPO5, EEF1A1, Ran and aminoacylated tRNA. Interacts with PARP1 and TXK. Interacts with KARS1. May interact with ERGIC2. Interacts with IFIT1 (via TPR repeats 4-7). Interacts with DLC1, facilitating distribution to the membrane periphery and ruffles upon growth factor stimulation. Interacts with ZPR1; the interaction occurs in a epidermal growth factor (EGF)-dependent manner. Interacts with PPP1R16B. Interacts with SPHK1 and SPHK2; both interactions increase SPHK1 and SPHK2 kinase activity. Interacts with guanyl-nucleotide exchange factor EEF1B2. Interacts (via middle-region) with HTATIP2 (via N-terminus); the interaction is direct and competes with EEF1A1 binding to guanyl-nucleotide exchange factor EEF1B2, thereby inhibiting GDP for GTP exchange and reactivation of EEF1A1. Interacts with tRNA. Post-translationally, ISGylated. Phosphorylated by TXK. Phosphorylation by PASK increases translation efficiency. Phosphorylated by ROCK2. Phosphorylation by TGFBR1 inhibits translation elongation. In terms of processing, trimethylated at Lys-79 by EEF1AKMT1. Methylated at Lys-165 by EEF1AKMT3, methylation by EEF1AKMT3 is dynamic as well as inducible by stress conditions, such as ER-stress, and plays a regulatory role on mRNA translation. Trimethylated at Lys-318 by EEF1AKMT2. Mono-, di-, and trimethylated at Lys-36 by EEF1AKMT4; trimethylated form is predominant. Methylation by EEF1AKMT4 contributes to the fine-tuning of translation rates for a subset of tRNAs. Trimethylated at Gly-2 by METTL13. Mono- and dimethylated at Lys-55 by METTL13; dimethylated form is predominant. Post-translationally, ubiquitinated at Lys-385 by RNF14 in response to ribosome collisions (ribosome stalling), leading to its degradation by the proteasome and rescue of stalled ribosomes.

Its subcellular location is the cytoplasm. The protein resides in the nucleus. The protein localises to the nucleolus. It is found in the cell membrane. The catalysed reaction is GTP + H2O = GDP + phosphate + H(+). Its function is as follows. Translation elongation factor that catalyzes the GTP-dependent binding of aminoacyl-tRNA (aa-tRNA) to the A-site of ribosomes during the elongation phase of protein synthesis. Base pairing between the mRNA codon and the aa-tRNA anticodon promotes GTP hydrolysis, releasing the aa-tRNA from EEF1A1 and allowing its accommodation into the ribosome. The growing protein chain is subsequently transferred from the P-site peptidyl tRNA to the A-site aa-tRNA, extending it by one amino acid through ribosome-catalyzed peptide bond formation. Also plays a role in the positive regulation of IFNG transcription in T-helper 1 cells as part of an IFNG promoter-binding complex with TXK and PARP1. Also plays a role in cytoskeleton organization by promoting actin bundling. This Equus caballus (Horse) protein is Elongation factor 1-alpha 1 (EEF1A1).